Here is a 121-residue protein sequence, read N- to C-terminus: Large ribosomal subunit protein bL20 (121 aa).

The protein belongs to the bacterial ribosomal protein bL20 family.

In terms of biological role, binds directly to 23S ribosomal RNA and is necessary for the in vitro assembly process of the 50S ribosomal subunit. It is not involved in the protein synthesizing functions of that subunit. In Francisella tularensis subsp. mediasiatica (strain FSC147), this protein is Large ribosomal subunit protein bL20.